Consider the following 146-residue polypeptide: Cysteine protease inhibitor 3 (146 aa).

Disulfide bonds link cysteine 8-cysteine 60 and cysteine 109-cysteine 115.

It belongs to the protease inhibitor I3 (leguminous Kunitz-type inhibitor) family.

The protein resides in the vacuole. In terms of biological role, inhibitor of cysteine proteases. May protect the plant by inhibiting proteases of invading organisms. This chain is Cysteine protease inhibitor 3, found in Solanum tuberosum (Potato).